The primary structure comprises 264 residues: Agamous-like MADS-box protein AGL61 (264 aa).

The MADS-box domain occupies 62–122 (IGRQKIPMVK…KKPFSFGHPS (61 aa)).

In terms of assembly, interacts with PHE1/AGL37, PHE2/AGL38, AGL80 and AGL86. Forms a heterodimer with AGL80. In terms of tissue distribution, expressed exclusively in the central cell of the female gametophyte and in early endosperm.

It localises to the nucleus. Probable transcription factor. Controls central cell differentiation during female gametophyte development. This is Agamous-like MADS-box protein AGL61 (AGL61) from Arabidopsis thaliana (Mouse-ear cress).